Here is a 212-residue protein sequence, read N- to C-terminus: Methylthioribulose-1-phosphate dehydratase (212 aa).

Zn(2+)-binding residues include His98 and His100.

This sequence belongs to the aldolase class II family. MtnB subfamily. It depends on Zn(2+) as a cofactor.

The catalysed reaction is 5-(methylsulfanyl)-D-ribulose 1-phosphate = 5-methylsulfanyl-2,3-dioxopentyl phosphate + H2O. Its pathway is amino-acid biosynthesis; L-methionine biosynthesis via salvage pathway; L-methionine from S-methyl-5-thio-alpha-D-ribose 1-phosphate: step 2/6. In terms of biological role, catalyzes the dehydration of methylthioribulose-1-phosphate (MTRu-1-P) into 2,3-diketo-5-methylthiopentyl-1-phosphate (DK-MTP-1-P). The chain is Methylthioribulose-1-phosphate dehydratase from Picosynechococcus sp. (strain ATCC 27264 / PCC 7002 / PR-6) (Agmenellum quadruplicatum).